The sequence spans 366 residues: Histidinol-phosphate aminotransferase (366 aa).

An N6-(pyridoxal phosphate)lysine modification is found at Lys228.

This sequence belongs to the class-II pyridoxal-phosphate-dependent aminotransferase family. Histidinol-phosphate aminotransferase subfamily. Homodimer. Pyridoxal 5'-phosphate is required as a cofactor.

It carries out the reaction L-histidinol phosphate + 2-oxoglutarate = 3-(imidazol-4-yl)-2-oxopropyl phosphate + L-glutamate. The protein operates within amino-acid biosynthesis; L-histidine biosynthesis; L-histidine from 5-phospho-alpha-D-ribose 1-diphosphate: step 7/9. This is Histidinol-phosphate aminotransferase from Corynebacterium glutamicum (strain R).